Reading from the N-terminus, the 477-residue chain is Ribulose bisphosphate carboxylase large chain (477 aa).

Residues 1-2 (MS) constitute a propeptide that is removed on maturation. Proline 3 is subject to N-acetylproline. The residue at position 14 (lysine 14) is an N6,N6,N6-trimethyllysine. 2 residues coordinate substrate: asparagine 123 and threonine 173. Residue lysine 175 is the Proton acceptor of the active site. Lysine 177 contributes to the substrate binding site. 3 residues coordinate Mg(2+): lysine 201, aspartate 203, and glutamate 204. Lysine 201 carries the post-translational modification N6-carboxylysine. Histidine 294 serves as the catalytic Proton acceptor. Residues arginine 295, histidine 327, and serine 379 each coordinate substrate.

Belongs to the RuBisCO large chain family. Type I subfamily. In terms of assembly, heterohexadecamer of 8 large chains and 8 small chains; disulfide-linked. The disulfide link is formed within the large subunit homodimers. Requires Mg(2+) as cofactor. In terms of processing, the disulfide bond which can form in the large chain dimeric partners within the hexadecamer appears to be associated with oxidative stress and protein turnover.

It localises to the plastid. It carries out the reaction 2 (2R)-3-phosphoglycerate + 2 H(+) = D-ribulose 1,5-bisphosphate + CO2 + H2O. The enzyme catalyses D-ribulose 1,5-bisphosphate + O2 = 2-phosphoglycolate + (2R)-3-phosphoglycerate + 2 H(+). Its function is as follows. RuBisCO catalyzes two reactions: the carboxylation of D-ribulose 1,5-bisphosphate, the primary event in carbon dioxide fixation, as well as the oxidative fragmentation of the pentose substrate in the photorespiration process. Both reactions occur simultaneously and in competition at the same active site. The protein is Ribulose bisphosphate carboxylase large chain (rbcL) of Lathraea clandestina (Purple toothwort).